We begin with the raw amino-acid sequence, 487 residues long: Serine/threonine-protein kinase BSK7 (487 aa).

Residue G2 is the site of N-myristoyl glycine attachment. In terms of domain architecture, Protein kinase spans 59–325 (ENIVSEHGEK…DLETPSHQLM (267 aa)). Residues 65-73 (HGEKAPNVV) and K87 each bind ATP. D181 serves as the catalytic Proton acceptor.

It belongs to the protein kinase superfamily. Ser/Thr protein kinase family.

The protein resides in the cell membrane. The catalysed reaction is L-seryl-[protein] + ATP = O-phospho-L-seryl-[protein] + ADP + H(+). The enzyme catalyses L-threonyl-[protein] + ATP = O-phospho-L-threonyl-[protein] + ADP + H(+). Probable serine/threonine kinase that acts as a positive regulator of brassinosteroid (BR) signaling downstream of the receptor kinase BRI1. Functions redundantly with BSK3, BSK5, BSK6 and BSK8. This is Serine/threonine-protein kinase BSK7 from Arabidopsis thaliana (Mouse-ear cress).